The primary structure comprises 257 residues: 3-deoxy-manno-octulosonate cytidylyltransferase (257 aa).

Belongs to the KdsB family.

It localises to the cytoplasm. It carries out the reaction 3-deoxy-alpha-D-manno-oct-2-ulosonate + CTP = CMP-3-deoxy-beta-D-manno-octulosonate + diphosphate. It participates in nucleotide-sugar biosynthesis; CMP-3-deoxy-D-manno-octulosonate biosynthesis; CMP-3-deoxy-D-manno-octulosonate from 3-deoxy-D-manno-octulosonate and CTP: step 1/1. It functions in the pathway bacterial outer membrane biogenesis; lipopolysaccharide biosynthesis. In terms of biological role, activates KDO (a required 8-carbon sugar) for incorporation into bacterial lipopolysaccharide in Gram-negative bacteria. The protein is 3-deoxy-manno-octulosonate cytidylyltransferase of Stenotrophomonas maltophilia (strain K279a).